We begin with the raw amino-acid sequence, 1520 residues long: Putative lipoprotein AcfD homolog (1520 aa).

Residues M1–G23 form the signal peptide. 2 disordered regions span residues A22–C107 and N226–G247. C24 carries N-palmitoyl cysteine lipidation. C24 carries S-diacylglycerol cysteine lipidation. The segment covering S31–T42 has biased composition (low complexity). A compositionally biased stretch (pro residues) spans D51–E77. A compositionally biased stretch (polar residues) spans G97 to C107. Residues S234–G247 are compositionally biased toward low complexity. One can recognise a Peptidase M60 domain in the interval G1081–E1381. Residues D1498–E1520 are disordered.

It to V.cholerae AcfD (VC_0845).

The protein resides in the cell inner membrane. Functionally, involved in a type II secretion system (T2SS, formerly general secretion pathway, GSP) for the export of folded proteins across the outer membrane. This is Putative lipoprotein AcfD homolog (yghJ) from Escherichia coli (strain K12).